Consider the following 100-residue polypeptide: NADH-quinone oxidoreductase subunit K (100 aa).

A run of 3 helical transmembrane segments spans residues 1–21, 28–48, and 64–84; these read MIGL…GLAG, ILLL…GFIA, and FIIA…ILWF.

This sequence belongs to the complex I subunit 4L family. As to quaternary structure, NDH-1 is composed of 14 different subunits. Subunits NuoA, H, J, K, L, M, N constitute the membrane sector of the complex.

It localises to the cell inner membrane. The enzyme catalyses a quinone + NADH + 5 H(+)(in) = a quinol + NAD(+) + 4 H(+)(out). NDH-1 shuttles electrons from NADH, via FMN and iron-sulfur (Fe-S) centers, to quinones in the respiratory chain. The immediate electron acceptor for the enzyme in this species is believed to be ubiquinone. Couples the redox reaction to proton translocation (for every two electrons transferred, four hydrogen ions are translocated across the cytoplasmic membrane), and thus conserves the redox energy in a proton gradient. The chain is NADH-quinone oxidoreductase subunit K from Helicobacter pylori (strain G27).